The sequence spans 67 residues: Cell division protein ZapB (67 aa).

Residues 3 to 59 (LELLSKLETKIQTALETIELLKMELEEEKQKSIGLAEQNQQLSQDLNSWNEKVTGLV) adopt a coiled-coil conformation.

This sequence belongs to the ZapB family. In terms of assembly, homodimer. The ends of the coiled-coil dimer bind to each other, forming polymers. Interacts with FtsZ.

It is found in the cytoplasm. Non-essential, abundant cell division factor that is required for proper Z-ring formation. It is recruited early to the divisome by direct interaction with FtsZ, stimulating Z-ring assembly and thereby promoting cell division earlier in the cell cycle. Its recruitment to the Z-ring requires functional FtsA or ZipA. In Shewanella woodyi (strain ATCC 51908 / MS32), this protein is Cell division protein ZapB.